The sequence spans 212 residues: Methylthioribulose-1-phosphate dehydratase (212 aa).

The Zn(2+) site is built by histidine 97 and histidine 99.

The protein belongs to the aldolase class II family. MtnB subfamily. As to quaternary structure, homotetramer. The cofactor is Zn(2+).

The catalysed reaction is 5-(methylsulfanyl)-D-ribulose 1-phosphate = 5-methylsulfanyl-2,3-dioxopentyl phosphate + H2O. Its pathway is amino-acid biosynthesis; L-methionine biosynthesis via salvage pathway; L-methionine from S-methyl-5-thio-alpha-D-ribose 1-phosphate: step 2/6. In terms of biological role, catalyzes the dehydration of methylthioribulose-1-phosphate (MTRu-1-P) into 2,3-diketo-5-methylthiopentyl-1-phosphate (DK-MTP-1-P). The protein is Methylthioribulose-1-phosphate dehydratase of Bacillus cereus (strain ATCC 10987 / NRS 248).